The sequence spans 498 residues: Flavin-dependent halogenase otaD (498 aa).

FAD contacts are provided by Gly14, Gly17, and Glu47. Residues Ser326 and Gly327 each contribute to the chloride site. Residue Val328 participates in FAD binding.

It belongs to the flavin-dependent halogenase family.

The enzyme catalyses ochratoxin B + FADH2 + chloride + O2 = ochratoxin A + FAD + 2 H2O. It functions in the pathway mycotoxin biosynthesis. Flavin-dependent halogenase; part of the gene cluster that mediates the biosynthesis of ochratoxin A (OTA), a mycotoxin composed of a chlorinated type I polyketide dihydroisocoumarin moiety linked to L-phenylalanine, and demonstrated to have nephrotoxic, immunotoxic, genotoxic, neurotoxic, and teratogenic properties. OtaD chlorinates ochratoxin B (OTB) at the C-5 position to form OTA. The pathway begins with the highly reducing polyketide synthase otaA that catalyzes the formation of the isocoumarin group during the initial stages of biosynthesis, starting from one acetate and 4 malonate units, to originate the characteristic pentaketide skeleton 7-methylmellein (7-MM) of the OTA molecule. The newly identified cyclase otaY might be involved in the polyketide cyclization reaction during the initial steps of the OTA biosynthesis. 7-MM is then oxidized into 7-carboxymellein (also called ochratoxin beta) by the cytochrome P450 monooxygenase otaC. The NRPS encoded by the otaB gene is involved in the linking of phenylalanine to the dihydroisocoumarin ring. The reaction catalyzed by NRPS results in the production of ochratoxin B (OTB), which is the non-chlorinated analog of OTA and which subsequently serves as the substrate of the halogenase otaD for chlorination activity to form the final molecular structure of OTA, containing a chlorine atom in the C-5 position of the molecule. This chain is Flavin-dependent halogenase otaD, found in Aspergillus carbonarius (strain ITEM 5010).